Reading from the N-terminus, the 874-residue chain is MKTTAEIRQSFLDFFHSKGHQVVESSSLVPENDPTLLFTNAGMNQFKDVFLGMDKRPYSRATTAQRCVRAGGKHNDLENVGYTARHHTFFEMLGNFSFGDYFKQDAINFAWEYLTSPQWLGLPKEKLWVTVYETDDEAYNIWNKEVGVPAERIIRIGDNKGSPYASDNFWAMGDTGPCGPCTEIFYDHGDHIWGGPPGSPEEDGDRYIEIWNVVFMQFNRLADGTMEKLPRPSVDTGMGLERISAVLQHVNSNYEIDIFKTLIAKTAEIVGATDLTNKSLRVIADHIRSCAYLIADGVIPSNEGRGYVLRRIIRRAVRHGHLLGAKESFFYKLVPTLIEVMAEAGKDVKAKQTNVEKLLRLEEEQFARTLERGLSLLDEALSQVKDGILSGEVAFKLYDTYGFPLDLTADVCRERNITIDEQAFDREMEAQRTRAQAASQFGVDYNSVIRVDGETKFEGYTEVESQAKITALFYDGKSVESIEAGQSAVVILENTPFYAESGGQIGDSGYLSTQGVTFNVKDTQKYGQVFGHIGELTQGSLKVGQSVNAIVDAKRRHNTSLNHSATHLLHAALRQILGLHVVQKGSLVSDKALRFDFAQPEAITKEQLSEIETLVNQKIRANFPVQTDIMDIDSAKAKGAMALFGEKYGDKVRVLTMGDFSIELCGGIHAKRTGDIGLFKIITENAVAAGIRRIEAVTGQNAIDWLHNQQRILTQSADLLKSDVNTLAEKIQQLQDKTKKVEKELQGLKEKAAMQAGSDFVKSAVKINGVSVIAQQLDGIETKSLRVMVDDLKNQLGSGVIAFASILDKKVNLVVGVTNDLTAKIKAGELVNLMAQQVGGKGGGRPDMAMAGGSQPENVAQAIKVAQDWLNKNL.

Zn(2+) contacts are provided by H563, H567, C665, and H669.

Belongs to the class-II aminoacyl-tRNA synthetase family. Zn(2+) serves as cofactor.

It is found in the cytoplasm. It catalyses the reaction tRNA(Ala) + L-alanine + ATP = L-alanyl-tRNA(Ala) + AMP + diphosphate. In terms of biological role, catalyzes the attachment of alanine to tRNA(Ala) in a two-step reaction: alanine is first activated by ATP to form Ala-AMP and then transferred to the acceptor end of tRNA(Ala). Also edits incorrectly charged Ser-tRNA(Ala) and Gly-tRNA(Ala) via its editing domain. The polypeptide is Alanine--tRNA ligase (Haemophilus influenzae (strain PittGG)).